Consider the following 368-residue polypeptide: MELAMGKVNEVLFMNRGEGESSYAQNSSFTQQVASMARPALENAVKTLFSKDFHLQALNAADLGCAAGPNTFAVISTTKRMMEKKCRELNCQTLELQVYLNDLFGNDFNTLFKGLSSEVVGNKCEEVPCYVMGVPGSFHGRLFPRSSLHLVHSSYSVHWLTQAPKGLTSREGLALNKGKIYISKTSPPVVREAYLSQFHEDFTMFLNARSQEVVPNGCMVLILRGRKASDPSDMESCFTWELLAIAIAELVSQGLIDEDKLDTFNIPCYFPSLEEVKDIVERDGSFTIDHMEGFELDSLQMQENDKWVRGENFTKVVRAFTEPIISNQFGHEIMGKLYDKFTHIVVSDLEAKLPKTTSIILVLSKIDG.

An S-adenosyl-L-homocysteine-binding site is contributed by Y23. Caffeine is bound at residue T30. S-adenosyl-L-homocysteine is bound by residues C65, N70, D102, L103, S137, and F138. The caffeine site is built by Y155, H158, and W159. Mg(2+) is bound at residue N176. R224 provides a ligand contact to caffeine. Mg(2+) is bound by residues D262, F264, and N265. A caffeine-binding site is contributed by F320.

It belongs to the methyltransferase superfamily. Type-7 methyltransferase family. Mg(2+) is required as a cofactor.

It catalyses the reaction theobromine + S-adenosyl-L-methionine = caffeine + S-adenosyl-L-homocysteine + H(+). The enzyme catalyses 7-methylxanthine + S-adenosyl-L-methionine = theobromine + S-adenosyl-L-homocysteine + H(+). It participates in alkaloid biosynthesis. Its function is as follows. Involved in the biosynthesis of caffeine. Catalyzes the conversion of 7-methylxanthine (7mX) to theobromine and of theobromine to caffeine. The protein is Caffeine synthase 3 of Camellia sinensis (Tea plant).